A 373-amino-acid chain; its full sequence is Hydrogenase maturation factor HypD (373 aa).

Fe cation is bound by residues cysteine 41, cysteine 69, and cysteine 72.

Belongs to the HypD family. As to quaternary structure, monomer. Interacts with HypC. Forms a complex with HypC, or HybG, and HypE. [4Fe-4S] cluster serves as cofactor.

It participates in protein modification; [NiFe] hydrogenase maturation. Involved in the maturation of [NiFe] hydrogenases. Involved in the biosynthesis of the Fe(CN)(2)CO cofactor. HypD may act as a scaffold on which the Fe(CN)(2)CO cofactor is formed. In complex with HypC, accepts the cyanide ligand generated by HypF and HypE, and also coordinates the carbon monoxide ligand. Required for the formation of all three hydrogenase isoenzymes. The chain is Hydrogenase maturation factor HypD from Escherichia coli (strain K12).